The primary structure comprises 690 residues: Eukaryotic translation initiation factor 3 subunit B (690 aa).

Basic and acidic residues predominate over residues 1–11 (MAKKKSEEHSG). A disordered region spans residues 1–36 (MAKKKSEEHSGADANDSDYQEEPNFEDPPGFVDNIS). A compositionally biased stretch (acidic residues) spans 15–25 (NDSDYQEEPNF). The 85-residue stretch at 57–141 (SVVVVDNIPK…HTFAVNLFTD (85 aa)) folds into the RRM domain. WD repeat units lie at residues 207–246 (TRERFTDTFVKWSPLGTYVVTFHKPGVAIWGGSSFQKIQK), 293–331 (DGMSVLSMFRWSHDDKFVARMGENSIHIYETPSFYLLDL), 334–369 (IKIPGIRGFSWSPTDNVIAYWVEEQNQIPARVTLME), 442–484 (EIRE…KPSL), and 530–575 (PDHF…IKRT). A coiled-coil region spans residues 595 to 645 (EEKQKEIKKNLKKYYAAFEQKDRLRLTRASKELLEKRSQLRETFMEYRNKR).

The protein belongs to the eIF-3 subunit B family. In terms of assembly, component of the eukaryotic translation initiation factor 3 (eIF-3) complex. The eIF-3 complex interacts with pix. Interacts with mxt.

The protein resides in the cytoplasm. Its function is as follows. RNA-binding component of the eukaryotic translation initiation factor 3 (eIF-3) complex, which is involved in protein synthesis of a specialized repertoire of mRNAs and, together with other initiation factors, stimulates binding of mRNA and methionyl-tRNAi to the 40S ribosome. The eIF-3 complex specifically targets and initiates translation of a subset of mRNAs involved in cell proliferation. This is Eukaryotic translation initiation factor 3 subunit B from Drosophila simulans (Fruit fly).